The chain runs to 212 residues: 3-isopropylmalate dehydratase small subunit (212 aa).

The protein belongs to the LeuD family. LeuD type 1 subfamily. Heterodimer of LeuC and LeuD.

It catalyses the reaction (2R,3S)-3-isopropylmalate = (2S)-2-isopropylmalate. It functions in the pathway amino-acid biosynthesis; L-leucine biosynthesis; L-leucine from 3-methyl-2-oxobutanoate: step 2/4. Functionally, catalyzes the isomerization between 2-isopropylmalate and 3-isopropylmalate, via the formation of 2-isopropylmaleate. The protein is 3-isopropylmalate dehydratase small subunit of Dechloromonas aromatica (strain RCB).